The chain runs to 275 residues: NH(3)-dependent NAD(+) synthetase (275 aa).

50–57 contributes to the ATP binding site; the sequence is GISGGVDS. Residue Asp56 participates in Mg(2+) binding. Arg147 lines the deamido-NAD(+) pocket. An ATP-binding site is contributed by Thr167. Glu172 is a binding site for Mg(2+). Residues Lys180 and Asp187 each coordinate deamido-NAD(+). Residues Lys196 and Thr218 each coordinate ATP. Residue 267 to 268 participates in deamido-NAD(+) binding; the sequence is HK.

It belongs to the NAD synthetase family. In terms of assembly, homodimer.

The enzyme catalyses deamido-NAD(+) + NH4(+) + ATP = AMP + diphosphate + NAD(+) + H(+). Its pathway is cofactor biosynthesis; NAD(+) biosynthesis; NAD(+) from deamido-NAD(+) (ammonia route): step 1/1. Its function is as follows. Catalyzes the ATP-dependent amidation of deamido-NAD to form NAD. Uses ammonia as a nitrogen source. This is NH(3)-dependent NAD(+) synthetase from Pseudomonas savastanoi pv. phaseolicola (strain 1448A / Race 6) (Pseudomonas syringae pv. phaseolicola (strain 1448A / Race 6)).